The sequence spans 292 residues: Acetylglutamate kinase (292 aa).

Substrate contacts are provided by residues 72–73 (GG), Arg-94, and Asn-187.

The protein belongs to the acetylglutamate kinase family. ArgB subfamily.

Its subcellular location is the cytoplasm. The catalysed reaction is N-acetyl-L-glutamate + ATP = N-acetyl-L-glutamyl 5-phosphate + ADP. Its pathway is amino-acid biosynthesis; L-arginine biosynthesis; N(2)-acetyl-L-ornithine from L-glutamate: step 2/4. Functionally, catalyzes the ATP-dependent phosphorylation of N-acetyl-L-glutamate. This chain is Acetylglutamate kinase, found in Trichodesmium erythraeum (strain IMS101).